The primary structure comprises 380 residues: tRNA-specific 2-thiouridylase MnmA (380 aa).

Residues 26-33 and L52 contribute to the ATP site; that span reads AMSGGVDS. Residue C120 is the Nucleophile of the active site. A disulfide bridge links C120 with C217. G144 lines the ATP pocket. The segment at 166–168 is interaction with tRNA; sequence RDQ. C217 serves as the catalytic Cysteine persulfide intermediate.

Belongs to the MnmA/TRMU family.

Its subcellular location is the cytoplasm. The enzyme catalyses S-sulfanyl-L-cysteinyl-[protein] + uridine(34) in tRNA + AH2 + ATP = 2-thiouridine(34) in tRNA + L-cysteinyl-[protein] + A + AMP + diphosphate + H(+). Its function is as follows. Catalyzes the 2-thiolation of uridine at the wobble position (U34) of tRNA, leading to the formation of s(2)U34. The polypeptide is tRNA-specific 2-thiouridylase MnmA (Jannaschia sp. (strain CCS1)).